A 620-amino-acid polypeptide reads, in one-letter code: Probable serine/threonine-protein kinase RTK1 (620 aa).

Disordered stretches follow at residues 1–20 (MVKE…SLFR), 29–130 (AKIF…PVRT), 153–186 (KDAF…SNLS), 210–237 (QAST…KKKS), and 252–271 (HDNH…TKPK). Residues 7 to 18 (LHSSSSTSLSSL) are compositionally biased toward low complexity. Residues 56–76 (KNTDSDQEDQIKYNKPNDRRS) are compositionally biased toward basic and acidic residues. Thr58 is subject to Phosphothreonine. At Ser60 the chain carries Phosphoserine. Polar residues-rich tracts occupy residues 95 to 107 (VASS…SPTS), 165 to 186 (TAHS…SNLS), and 210 to 222 (QAST…LQHN). Phosphoserine is present on Ser216. Residues 254–263 (NHHHHHHHNR) show a composition bias toward basic residues. Positions 302-575 (GIPGRKLGEG…MNDVVKDDWL (274 aa)) constitute a Protein kinase domain. ATP is bound by residues 308-316 (LGEGASGSV) and Lys330. Lys334 is covalently cross-linked (Glycyl lysine isopeptide (Lys-Gly) (interchain with G-Cter in ubiquitin)). Catalysis depends on Asp430, which acts as the Proton acceptor.

It belongs to the protein kinase superfamily. Ser/Thr protein kinase family. As to quaternary structure, interacts with ribosome biogenesis factors ARC1, CKA2 and GUS1.

The enzyme catalyses L-seryl-[protein] + ATP = O-phospho-L-seryl-[protein] + ADP + H(+). The catalysed reaction is L-threonyl-[protein] + ATP = O-phospho-L-threonyl-[protein] + ADP + H(+). Functionally, probable serine/threonine-protein kinase that may be involved in ribosome biogenesis. The chain is Probable serine/threonine-protein kinase RTK1 (RTK1) from Saccharomyces cerevisiae (strain ATCC 204508 / S288c) (Baker's yeast).